Consider the following 161-residue polypeptide: Phosphopantetheine adenylyltransferase (161 aa).

Ser8 contacts substrate. ATP is bound by residues 8 to 9 (SF) and His16. Lys40, Thr72, and Arg86 together coordinate substrate. ATP-binding positions include 87-89 (GLR), Glu97, and 122-128 (HSFLSSS).

Belongs to the bacterial CoaD family. In terms of assembly, homohexamer. Mg(2+) is required as a cofactor.

It is found in the cytoplasm. It catalyses the reaction (R)-4'-phosphopantetheine + ATP + H(+) = 3'-dephospho-CoA + diphosphate. It participates in cofactor biosynthesis; coenzyme A biosynthesis; CoA from (R)-pantothenate: step 4/5. Reversibly transfers an adenylyl group from ATP to 4'-phosphopantetheine, yielding dephospho-CoA (dPCoA) and pyrophosphate. The sequence is that of Phosphopantetheine adenylyltransferase from Gloeobacter violaceus (strain ATCC 29082 / PCC 7421).